The chain runs to 53 residues: ATP synthase protein 8 (53 aa).

A helical membrane pass occupies residues 9–29 (WIFFLFFFICIFLIFNIMNYF).

The protein belongs to the ATPase protein 8 family. As to quaternary structure, F-type ATPases have 2 components, CF(1) - the catalytic core - and CF(0) - the membrane proton channel.

Its subcellular location is the mitochondrion membrane. Its function is as follows. Mitochondrial membrane ATP synthase (F(1)F(0) ATP synthase or Complex V) produces ATP from ADP in the presence of a proton gradient across the membrane which is generated by electron transport complexes of the respiratory chain. F-type ATPases consist of two structural domains, F(1) - containing the extramembraneous catalytic core and F(0) - containing the membrane proton channel, linked together by a central stalk and a peripheral stalk. During catalysis, ATP synthesis in the catalytic domain of F(1) is coupled via a rotary mechanism of the central stalk subunits to proton translocation. Part of the complex F(0) domain. Minor subunit located with subunit a in the membrane. The sequence is that of ATP synthase protein 8 (mt:ATPase8) from Bombyx mori (Silk moth).